Consider the following 224-residue polypeptide: Putative O-methyltransferase MT1258 (224 aa).

Residues 1-10 (MDGTPGHDDM) are compositionally biased toward basic and acidic residues. Residues 1–21 (MDGTPGHDDMPGQPAPSRGES) form a disordered region. Residues Val-51, Glu-73, 75–76 (GT), Ser-81, Asp-99, and Ile-100 each bind S-adenosyl-L-methionine. Asp-147 contributes to the substrate binding site. Asp-149 lines the S-adenosyl-L-methionine pocket.

It belongs to the class I-like SAM-binding methyltransferase superfamily. Cation-dependent O-methyltransferase family.

In Mycobacterium tuberculosis (strain CDC 1551 / Oshkosh), this protein is Putative O-methyltransferase MT1258.